Consider the following 282-residue polypeptide: MTAPFTAETGDAHIDDVVGVEVTIDGMLVIADKLGLTDFPPSMGIRLNIPQPDLRKVVWEQVERDLSAQGVLDVYGNPHPEVAAMVDTLARADRTLECRWWRRDAGGKMIRFVVCRKGGRHVVAARDNDLLVLQRVAPQIGLAGMVMTVLGEGSPANVEPLTGVADRLAQCRTAEELTGYGIPPTSARAYASIISEPDGWVEIVANERHPGGTTSQVDVAAGVLDAKQGRIVSIPRRVNGELYGSFLSGTKDNLERALEGLVEFLPSKTWFDKTDADNAYQH.

This sequence belongs to the EspG family. Interacts specifically with ESX-1-dependent PE/PPE proteins.

Its subcellular location is the cytoplasm. Its function is as follows. Part of the ESX-1 / type VII specialized secretion system (T7SS), which exports several proteins including EsxA and EsxB. Specific chaperone for cognate PE/PPE proteins, plays an important role in preventing aggregation of PE/PPE dimers. Also plays a role in DNA conjugation, in at least recipient strain. The sequence is that of ESX-1 secretion-associated protein EspG1 from Mycolicibacterium smegmatis (strain ATCC 700084 / mc(2)155) (Mycobacterium smegmatis).